The chain runs to 179 residues: Large ribosomal subunit protein uL5 (179 aa).

Belongs to the universal ribosomal protein uL5 family. As to quaternary structure, part of the 50S ribosomal subunit; part of the 5S rRNA/L5/L18/L25 subcomplex. Contacts the 5S rRNA and the P site tRNA. Forms a bridge to the 30S subunit in the 70S ribosome.

This is one of the proteins that bind and probably mediate the attachment of the 5S RNA into the large ribosomal subunit, where it forms part of the central protuberance. In the 70S ribosome it contacts protein S13 of the 30S subunit (bridge B1b), connecting the 2 subunits; this bridge is implicated in subunit movement. Contacts the P site tRNA; the 5S rRNA and some of its associated proteins might help stabilize positioning of ribosome-bound tRNAs. This Histophilus somni (strain 129Pt) (Haemophilus somnus) protein is Large ribosomal subunit protein uL5.